A 248-amino-acid chain; its full sequence is Probable transcriptional regulatory protein Ecaj_0351 (248 aa).

Positions 1-21 (MAGHSQFANIKHRKGAQDAKR) are disordered.

This sequence belongs to the TACO1 family.

It localises to the cytoplasm. This is Probable transcriptional regulatory protein Ecaj_0351 from Ehrlichia canis (strain Jake).